The following is a 378-amino-acid chain: UPF0754 membrane protein SH1116 (378 aa).

The next 2 helical transmembrane spans lie at 4–24 (FLVILFMVVVGAVIGGVTNVI) and 358–378 (SLGFILGGIIGFFQGIVAIFV).

The protein belongs to the UPF0754 family.

It localises to the cell membrane. In Staphylococcus haemolyticus (strain JCSC1435), this protein is UPF0754 membrane protein SH1116.